The primary structure comprises 145 residues: Small ribosomal subunit protein uS12 (145 aa).

P64 is modified (hydroxyproline).

Belongs to the universal ribosomal protein uS12 family.

The polypeptide is Small ribosomal subunit protein uS12 (rps23) (Aspergillus fumigatus (strain ATCC MYA-4609 / CBS 101355 / FGSC A1100 / Af293) (Neosartorya fumigata)).